The sequence spans 1935 residues: Myosin heavy chain, fast skeletal muscle (1935 aa).

The Myosin N-terminal SH3-like domain occupies 32 to 81 (DAKTAFFVVDPDEMYLKGTLVSKEGGKATVKTHSGKTVTVKEDEIFPMNP). The Myosin motor domain maps to 85–779 (DKIEDMAMMT…LLGALEEMRD (695 aa)). The residue at position 129 (Lys129) is an N6,N6,N6-trimethyllysine. 178 to 185 (GESGAGKT) lines the ATP pocket. Actin-binding stretches follow at residues 659–681 (LMTN…ESKT) and 761–775 (HTKV…GALE). The 30-residue stretch at 782 to 811 (LALLVTMTQALCRGYVMRKEFVKMMERRES) folds into the IQ domain. Residues 812 to 839 (IYSIQYNIRSFMNVKHWPWMKLYFKIKP) form a hinge region. Positions 840–1935 (LLKSAETEKE…RDAGKSKDEE (1096 aa)) form a coiled coil. Disordered regions lie at residues 1589–1608 (RNSQ…EVRS) and 1902–1935 (HELE…KDEE). A compositionally biased stretch (polar residues) spans 1592–1603 (QRVIDSMQSTLD). Basic and acidic residues-rich tracts occupy residues 1902–1913 (HELEEAQERADV) and 1924–1935 (KSRDAGKSKDEE).

It belongs to the TRAFAC class myosin-kinesin ATPase superfamily. Myosin family. As to quaternary structure, muscle myosin is a hexameric protein that consists of 2 heavy chain subunits (MHC), 2 alkali light chain subunits (MLC) and 2 regulatory light chain subunits (MLC-2).

Its subcellular location is the cytoplasm. The protein resides in the myofibril. Functionally, muscle contraction. This chain is Myosin heavy chain, fast skeletal muscle, found in Cyprinus carpio (Common carp).